Here is a 329-residue protein sequence, read N- to C-terminus: Zygote arrest protein 1 (329 aa).

Disordered regions lie at residues 106–132 (LRRR…RTQA) and 146–218 (FREE…DDLK). Over residues 149–162 (EGEEEEDTDLEVTE) the composition is skewed to acidic residues. Residues 166–177 (SAEKLESAEKNV) are compositionally biased toward basic and acidic residues. The 3CxxC-type zinc finger occupies 231–314 (KYGFYHCKDC…RQDLCGRCKG (84 aa)).

This sequence belongs to the ZAR1 family. Specifically expressed in ovaries but absent in testes.

The protein resides in the cytoplasm. The protein localises to the cytoplasmic ribonucleoprotein granule. Its function is as follows. mRNA-binding protein required for maternal mRNA storage, translation and degradation during oocyte maturation. Probably promotes formation of some phase-separated membraneless compartment that stores maternal mRNAs in oocytes: acts by undergoing liquid-liquid phase separation upon binding to maternal mRNAs. Binds to the 3'-UTR of zona pellucida mRNAs, inhibiting their translation. This chain is Zygote arrest protein 1, found in Danio rerio (Zebrafish).